A 150-amino-acid chain; its full sequence is Plasmin C (150 aa).

The N-terminal stretch at 1–14 is a signal peptide; the sequence is MRSFFLLCALVAVC.

This Physarum polycephalum (Slime mold) protein is Plasmin C (PLSC).